The sequence spans 656 residues: UvrABC system protein B (656 aa).

The Helicase ATP-binding domain maps to 23-180 (EGIKKGYRFQ…QHLAKIGYER (158 aa)). ATP is bound at residue 36-43 (GVTGSGKT). Residues 89-112 (YYDYYQPEAYVPTKDLYIEKNADI) carry the Beta-hairpin motif. One can recognise a Helicase C-terminal domain in the interval 426 to 588 (QVDDLISEIK…ITPKTIVKPL (163 aa)). The region spanning 614 to 649 (EEYLSLLEEEMYRAASELRYEDAAKLRDEIFRLREE) is the UVR domain.

It belongs to the UvrB family. As to quaternary structure, forms a heterotetramer with UvrA during the search for lesions. Interacts with UvrC in an incision complex.

The protein localises to the cytoplasm. The UvrABC repair system catalyzes the recognition and processing of DNA lesions. A damage recognition complex composed of 2 UvrA and 2 UvrB subunits scans DNA for abnormalities. Upon binding of the UvrA(2)B(2) complex to a putative damaged site, the DNA wraps around one UvrB monomer. DNA wrap is dependent on ATP binding by UvrB and probably causes local melting of the DNA helix, facilitating insertion of UvrB beta-hairpin between the DNA strands. Then UvrB probes one DNA strand for the presence of a lesion. If a lesion is found the UvrA subunits dissociate and the UvrB-DNA preincision complex is formed. This complex is subsequently bound by UvrC and the second UvrB is released. If no lesion is found, the DNA wraps around the other UvrB subunit that will check the other stand for damage. The sequence is that of UvrABC system protein B from Pseudothermotoga lettingae (strain ATCC BAA-301 / DSM 14385 / NBRC 107922 / TMO) (Thermotoga lettingae).